Reading from the N-terminus, the 831-residue chain is SID1 transmembrane family member 1 (831 aa).

The signal sequence occupies residues 1 to 19; that stretch reads MLDCPRLALLCALPWLLRA. The Extracellular portion of the chain corresponds to 20–308; sequence AVPGHRAEPL…SVKGSVYVKS (289 aa). N-linked (GlcNAc...) asparagine glycosylation is found at asparagine 67, asparagine 83, asparagine 136, and asparagine 281. The chain crosses the membrane as a helical span at residues 309–329; sequence SLFSVFVFLSFYLGCLLVVFV. Residues 330–441 are Cytoplasmic-facing; the sequence is HHMRFQRKPV…DRRIVSKKYK (112 aa). Residues 354–408 are disordered; it reads VSHPITASTPEGSNYGAIDESSSSPGRQMSSSDGGQPCHSDTDSSVEESDFDTMP. Positions 374–385 are enriched in low complexity; the sequence is SSSSPGRQMSSS. Acidic residues predominate over residues 397 to 408; the sequence is SSVEESDFDTMP. Residues 442 to 462 form a helical membrane-spanning segment; sequence IYFWNIITIAVFYALPVMQLV. Topologically, residues 463-493 are extracellular; that stretch reads ITYQTVVNVTGNQDICYYNFLCAHPLGVLSA. Asparagine 470 carries N-linked (GlcNAc...) asparagine glycosylation. A helical membrane pass occupies residues 494–514; sequence FNNILSNLGHVLLGFLFLLIV. Residues 515-540 are Cytoplasmic-facing; that stretch reads LRRDLLHRRALEAKDIFAMEYGIPKH. The helical transmembrane segment at 541-561 threads the bilayer; it reads FGLFYAMGIALMMEGVLSACY. The Extracellular portion of the chain corresponds to 562-571; the sequence is HVCPNYSNFQ. An N-linked (GlcNAc...) asparagine glycan is attached at asparagine 566. Residues 572-589 traverse the membrane as a helical segment; that stretch reads FDTSFMYMIAGLCMLKLY. The Cytoplasmic portion of the chain corresponds to 590-599; sequence QTRHPDINAS. The chain crosses the membrane as a helical span at residues 600-620; that stretch reads AYSAYASFAVVITLTVLGVVF. The Extracellular segment spans residues 621-625; that stretch reads GKNDV. Residues 626–646 form a helical membrane-spanning segment; it reads WFWIIFSAIHVLASLALSTQI. Residues 647–687 lie on the Cytoplasmic side of the membrane; the sequence is YYMGRFKIDVSDTDLGIFRRAAMVFYTDCIQQCSRPLYMDR. A helical membrane pass occupies residues 688–708; it reads MVLLIVGNLVNWSFALFGLIY. At 709-714 the chain is on the extracellular side; sequence RPRDFA. The chain crosses the membrane as a helical span at residues 715–735; that stretch reads SYMLGIFICNLLLYLAFYIIM. Topologically, residues 736 to 745 are cytoplasmic; sequence KLRSSEKVLP. Residues 746-766 form a helical membrane-spanning segment; sequence LPVFCIVATAVVWAAALYFFF. At 767 to 795 the chain is on the extracellular side; it reads QNLSSWEGTPAESREKNRECVLLGFFDDH. A glycan (N-linked (GlcNAc...) asparagine) is linked at asparagine 768. A helical transmembrane segment spans residues 796–816; the sequence is DIWHFLSATALFFSFLVLLTL. The Cytoplasmic portion of the chain corresponds to 817–831; it reads DDDLDVVRRDQIPVF.

It belongs to the SID1 family.

Its subcellular location is the membrane. In vitro binds long double-stranded RNA (dsRNA) (500 and 700 base pairs), but not dsRNA shorter than 300 bp. Not involved in RNA autophagy, a process in which RNA is directly imported into lysosomes in an ATP-dependent manner, and degraded. This chain is SID1 transmembrane family member 1 (Sidt1), found in Rattus norvegicus (Rat).